Consider the following 282-residue polypeptide: Tyrosine recombinase XerA (282 aa).

One can recognise a Core-binding (CB) domain in the interval 2–79 (EAINEVIEEY…ALRSYFRFEG (78 aa)). The Tyr recombinase domain occupies 95 to 271 (SLPKSLTREE…TVEHLRKAQE (177 aa)). Residues Arg132, Lys157, His223, Arg226, and His249 contribute to the active site. The active-site O-(3'-phospho-DNA)-tyrosine intermediate is Tyr258.

It belongs to the 'phage' integrase family. XerA subfamily.

Its subcellular location is the cytoplasm. Site-specific tyrosine recombinase, which acts by catalyzing the cutting and rejoining of the recombining DNA molecules. In Thermococcus onnurineus (strain NA1), this protein is Tyrosine recombinase XerA.